Reading from the N-terminus, the 213-residue chain is MRPGTGQGGLEAPGEPGPNLRQRWPLLLLGLAVVTHGLLRPTAASQSRALGPGAPGGSSRSSLRSRWGRFLLQRGSWTGPRCWPRGFQSKHNSVTHVFGSGTQLTVLSQPKATPSVTLFPPSSEELQANKATLVCLMNDFYPGILTVTWKADGTPITQGVEMTTPSKQSNNKYAASSYLSLTPEQWRSRRSYSCQVMHEGSTVEKTVAPAECS.

The first 37 residues, 1 to 37 (MRPGTGQGGLEAPGEPGPNLRQRWPLLLLGLAVVTHG), serve as a signal peptide directing secretion. Residues 97–108 (VFGSGTQLTVLS) form a j region region. The tract at residues 109 to 213 (QPKATPSVTL…EKTVAPAECS (105 aa)) is c region. The region spanning 114–208 (PSVTLFPPSS…EGSTVEKTVA (95 aa)) is the Ig-like C1-type domain. Cysteine 135 and cysteine 194 are disulfide-bonded.

In terms of assembly, associates non-covalently with VPREB1. Interacts with SYNV1/HRD1 (via N-terminus); this interaction leads to increased IGLL1 ubiquitination and degradation in pre-B cells, possibly through a lysosomal, not proteasomal, pathway. Expressed only in pre-B-cells and a special B-cell line (which is surface Ig negative).

The protein resides in the endoplasmic reticulum. It is found in the secreted. In terms of biological role, critical for B-cell development. The sequence is that of Immunoglobulin lambda-like polypeptide 1 (IGLL1) from Homo sapiens (Human).